Here is a 316-residue protein sequence, read N- to C-terminus: Coiled-coil domain-containing protein 42 (316 aa).

Coiled coils occupy residues 43 to 151 (RLLE…EYSI) and 182 to 236 (HHDL…SDVI).

It belongs to the CFAP73 family. Interacts with ODF1 and ODF2. Interacts with CCDC38. Interacts with CCDC146. Interacts with CFAP53.

It is found in the cytoplasm. Its subcellular location is the perinuclear region. The protein localises to the cytoskeleton. It localises to the cell projection. The protein resides in the cilium. It is found in the flagellum. Its subcellular location is the microtubule organizing center. The protein localises to the centrosome. Essential for male fertility. Required for sperm development. The chain is Coiled-coil domain-containing protein 42 from Bos taurus (Bovine).